The sequence spans 871 residues: Tegument protein UL47 homolog (871 aa).

A disordered region spans residues 1–212; it reads MDQHHGARGG…DEDDMEVIRD (212 aa). The short motif at 13–33 is the Nuclear localization signal element; it reads IRRPRRSIESRSHPFRATGNT. 2 stretches are compositionally biased toward polar residues: residues 30–41 and 59–81; these read TGNTQRTYSTPR and EQAS…STSF. Acidic residues-rich tracts occupy residues 114–134, 146–155, and 185–207; these read SSSE…EEDQ, SSDENDEEED, and SESE…EDDM.

The protein belongs to the alphaherpesvirinae HHV-1 UL47 family. As to quaternary structure, interacts with US3 kinase. Interacts with UL31 and UL34; these interactions seem important for efficient virion nuclear egress. Interacts with UL41/VHS. In terms of processing, phosphorylated by US3. This phosphorylation is required for proper nuclear localization.

It is found in the virion tegument. The protein localises to the host nucleus. It localises to the host cytoplasm. Its function is as follows. Tegument protein that can bind to various RNA transcripts. Plays a role in the attenuation of selective viral and cellular mRNA degradation by modulating the activity of host shutoff RNase UL41/VHS. Also plays a role in the primary envelopment of virions in the perinuclear space, probably by interacting with two nuclear egress proteins UL31 and UL34. The polypeptide is Tegument protein UL47 homolog (Equine herpesvirus 1 (strain V592) (EHV-1)).